A 242-amino-acid polypeptide reads, in one-letter code: Small ribosomal subunit protein uS2 (242 aa).

It belongs to the universal ribosomal protein uS2 family.

The sequence is that of Small ribosomal subunit protein uS2 from Vibrio vulnificus (strain CMCP6).